Here is a 363-residue protein sequence, read N- to C-terminus: NAD(P)H-quinone oxidoreductase subunit 1, chloroplastic (363 aa).

6 helical membrane passes run 30–50, 104–124, 129–149, 248–268, 300–320, and 343–363; these read FLPI…IVWL, IAVI…HLVL, IGVF…LMSG, YSGI…LVSS, VFGT…FLFI, and FLLP…LLSL.

This sequence belongs to the complex I subunit 1 family. NDH is composed of at least 16 different subunits, 5 of which are encoded in the nucleus.

Its subcellular location is the plastid. It is found in the chloroplast thylakoid membrane. The catalysed reaction is a plastoquinone + NADH + (n+1) H(+)(in) = a plastoquinol + NAD(+) + n H(+)(out). It catalyses the reaction a plastoquinone + NADPH + (n+1) H(+)(in) = a plastoquinol + NADP(+) + n H(+)(out). Functionally, NDH shuttles electrons from NAD(P)H:plastoquinone, via FMN and iron-sulfur (Fe-S) centers, to quinones in the photosynthetic chain and possibly in a chloroplast respiratory chain. The immediate electron acceptor for the enzyme in this species is believed to be plastoquinone. Couples the redox reaction to proton translocation, and thus conserves the redox energy in a proton gradient. This Eucalyptus globulus subsp. globulus (Tasmanian blue gum) protein is NAD(P)H-quinone oxidoreductase subunit 1, chloroplastic.